The chain runs to 153 residues: MSTVTEFPSATAKARYVRVSATKARRVIDLVRGKSVEEALDILRWAPQAASEPVAKVIASAAANAQNNEGLDPSTLVVATVYADEGPTAKRIRPRAQGRAFRIRKRTSHITVIVESRPPKQKGASAASARSRRAQGSKAAATKKSAETKEGSE.

Residues 110–153 (ITVIVESRPPKQKGASAASARSRRAQGSKAAATKKSAETKEGSE) are disordered. A compositionally biased stretch (basic and acidic residues) spans 144–153 (KSAETKEGSE).

Belongs to the universal ribosomal protein uL22 family. As to quaternary structure, part of the 50S ribosomal subunit.

In terms of biological role, this protein binds specifically to 23S rRNA; its binding is stimulated by other ribosomal proteins, e.g. L4, L17, and L20. It is important during the early stages of 50S assembly. It makes multiple contacts with different domains of the 23S rRNA in the assembled 50S subunit and ribosome. The globular domain of the protein is located near the polypeptide exit tunnel on the outside of the subunit, while an extended beta-hairpin is found that lines the wall of the exit tunnel in the center of the 70S ribosome. The polypeptide is Large ribosomal subunit protein uL22 (Mycolicibacterium smegmatis (strain ATCC 700084 / mc(2)155) (Mycobacterium smegmatis)).